A 265-amino-acid chain; its full sequence is Phosphonoacetaldehyde hydrolase (265 aa).

Asp-9 serves as the catalytic Nucleophile. Mg(2+) contacts are provided by Asp-9 and Ala-11. Lys-50 serves as the catalytic Schiff-base intermediate with substrate. Residue Asp-184 coordinates Mg(2+).

This sequence belongs to the HAD-like hydrolase superfamily. PhnX family. As to quaternary structure, homodimer. Mg(2+) is required as a cofactor.

The enzyme catalyses phosphonoacetaldehyde + H2O = acetaldehyde + phosphate + H(+). In terms of biological role, involved in phosphonate degradation. In Lactiplantibacillus plantarum (strain ATCC BAA-793 / NCIMB 8826 / WCFS1) (Lactobacillus plantarum), this protein is Phosphonoacetaldehyde hydrolase.